Reading from the N-terminus, the 344-residue chain is Lipase chaperone (344 aa).

The helical transmembrane segment at Val-14–Ala-34 threads the bilayer. Low complexity predominate over residues Leu-45 to Ala-57. Positions Leu-45–Ser-78 are disordered.

The protein belongs to the lipase chaperone family.

The protein localises to the cell inner membrane. May be involved in the folding of the extracellular lipase during its passage through the periplasm. In Burkholderia ambifaria (strain ATCC BAA-244 / DSM 16087 / CCUG 44356 / LMG 19182 / AMMD) (Burkholderia cepacia (strain AMMD)), this protein is Lipase chaperone.